We begin with the raw amino-acid sequence, 800 residues long: Putative antiporter subunit mnhA2 (800 aa).

The next 21 membrane-spanning stretches (helical) occupy residues 1–21 (MSLV…LFTL), 29–49 (VAGY…IMKI), 78–98 (GLSL…FFYA), 109–129 (LPRF…IVIA), 133–153 (ILMY…ISYW), 167–187 (FMIT…LYII), 209–229 (FIPM…QFPF), 241–261 (TPVS…FLLF), 272–292 (VYIY…SLTA), 300–320 (GILA…VGLG), 336–356 (ILVL…KCAL), 387–407 (IVML…GFLS), 424–444 (YGFV…ILTF), 472–492 (PWLF…IFFV), 528–548 (VNLP…LALV), 595–615 (IMIT…TVGF), 627–647 (GPLE…LIFI), 651–671 (LTMV…FIAM), 676–696 (LALT…VSFS), 712–732 (TFKI…IFVA), and 768–788 (LDTM…YTLL).

Belongs to the CPA3 antiporters (TC 2.A.63) subunit A family. In terms of assembly, may form a heterooligomeric complex that consists of seven subunits: mnhA2, mnhB2, mnhC2, mnhD2, mnhE2, mnhF2 and mnhG2.

It localises to the cell membrane. In Staphylococcus epidermidis (strain ATCC 12228 / FDA PCI 1200), this protein is Putative antiporter subunit mnhA2 (mnhA2).